A 92-amino-acid chain; its full sequence is Putative pterin-4-alpha-carbinolamine dehydratase (92 aa).

Belongs to the pterin-4-alpha-carbinolamine dehydratase family.

It carries out the reaction (4aS,6R)-4a-hydroxy-L-erythro-5,6,7,8-tetrahydrobiopterin = (6R)-L-erythro-6,7-dihydrobiopterin + H2O. In Haloarcula marismortui (strain ATCC 43049 / DSM 3752 / JCM 8966 / VKM B-1809) (Halobacterium marismortui), this protein is Putative pterin-4-alpha-carbinolamine dehydratase.